We begin with the raw amino-acid sequence, 378 residues long: Acetylornithine deacetylase (378 aa).

H76 is a Zn(2+) binding site. D78 is an active-site residue. D108 contributes to the Zn(2+) binding site. The active site involves E140. Zn(2+) contacts are provided by E141, E165, and H351.

It belongs to the peptidase M20A family. ArgE subfamily. As to quaternary structure, homodimer. It depends on Zn(2+) as a cofactor. The cofactor is Co(2+). Glutathione serves as cofactor.

The protein resides in the cytoplasm. The catalysed reaction is N(2)-acetyl-L-ornithine + H2O = L-ornithine + acetate. It participates in amino-acid biosynthesis; L-arginine biosynthesis; L-ornithine from N(2)-acetyl-L-ornithine (linear): step 1/1. Functionally, catalyzes the hydrolysis of the amide bond of N(2)-acetylated L-amino acids. Cleaves the acetyl group from N-acetyl-L-ornithine to form L-ornithine, an intermediate in L-arginine biosynthesis pathway, and a branchpoint in the synthesis of polyamines. The sequence is that of Acetylornithine deacetylase from Vibrio cholerae serotype O1 (strain ATCC 39541 / Classical Ogawa 395 / O395).